A 372-amino-acid polypeptide reads, in one-letter code: Nucleosome assembly protein 1;1 (372 aa).

The stretch at 26–80 (VNALKNKLQNLAGQRSDVLENLTPNVRKRVDALRDIQSQHDELEAKFREERAILE) forms a coiled coil. Residue Ser-41 is modified to Phosphoserine. The Nuclear export signal signature appears at 47–62 (LTPNVRKRVDALRDIQ). Residues 223–228 (KKKPKK) carry the Nuclear localization signal motif. The tract at residues 299-372 (AMEAEDFEID…DERPPECKQQ (74 aa)) is disordered. The span at 300 to 337 (MEAEDFEIDDDEEDDIDEDEDEEDEEDEEDDDDEDEEE) shows a compositional bias: acidic residues. Residues 360–372 (GKQDERPPECKQQ) show a composition bias toward basic and acidic residues. Cys-369 is modified (cysteine methyl ester). Cys-369 carries S-farnesyl cysteine lipidation. A propeptide spans 370–372 (KQQ) (removed in mature form).

The protein belongs to the nucleosome assembly protein (NAP) family. As to quaternary structure, can form homomeric and heteromeric protein complexes with NAP1;2, NAP1;3 and NAP1;4. Binds histone H2A. Interacts with PP438/PNM1. In terms of processing, prenylation of the protein is required for its function during the cell proliferation phase of leaf development. Ubiquitous.

It is found in the nucleus. The protein resides in the cytoplasm. In terms of biological role, may modulate chromatin structure by regulation of nucleosome assembly/disassembly. Contributes to the regulation of cell proliferation and cell expansion. May function in nucleotide excision repair (NER). Involved in somatic homologous recombination. The protein is Nucleosome assembly protein 1;1 (NAP1;1) of Arabidopsis thaliana (Mouse-ear cress).